The primary structure comprises 471 residues: Putative multidrug resistance protein MdtD (471 aa).

Transmembrane regions (helical) follow at residues 12 to 32 (LWIV…VNTA), 49 to 69 (MVIV…GWLA), 77 to 97 (IFFT…QSST), 106 to 126 (VLQG…VMKI), 138 to 158 (FVTL…GLLV), 165 to 185 (WIFL…LWLM), 197 to 217 (FSGF…LDGY), 225 to 245 (AGLG…LWHA), 263 to 285 (FSLG…FMTP), 290 to 312 (IGLG…GSMG), 342 to 362 (LLFM…VMLF), 396 to 416 (MVMQ…LGAF), and 431 to 451 (IFFW…LVFA).

The protein belongs to the major facilitator superfamily. TCR/Tet family.

Its subcellular location is the cell inner membrane. This chain is Putative multidrug resistance protein MdtD, found in Cronobacter sakazakii (strain ATCC BAA-894) (Enterobacter sakazakii).